The primary structure comprises 432 residues: MSSSCSGLTRVLVAVATALVSSSSPCPQAWGPPGVQYGQPGRPVMLCCPGVSAGTPVSWFRDGDSRLLQGPDSGLGHRLVLAQVDSPDEGTYVCQTLDGVSGGMVTLKLGFPPARPEVSCQAVDYENFSCTWSPGQVSGLPTRYLTSYRKKTLPGAESQRESPSTGPWPCPQDPLEASRCVVHGAEFWSEYRINVTEVNPLGASTCLLDVRLQSILRPDPPQGLRVESVPGYPRRLHASWTYPASWRRQPHFLLKFRLQYRPAQHPAWSTVEPIGLEEVITDAVAGLPHAVRVSARDFLDAGTWSAWSPEAWGTPSTGPLQDEIPDWSQGHGQQLEAVVAQEDSPAPARPSLQPDPRPLDHRDPLEQVAVLASLGIFSCLGLAVGALALGLWLRLRRSGKDGPQKPGLLAPMIPVEKLPGIPNLQRTPENFS.

A signal peptide spans 1 to 23; the sequence is MSSSCSGLTRVLVAVATALVSSS. At 24 to 372 the chain is on the extracellular side; sequence SPCPQAWGPP…DPLEQVAVLA (349 aa). One can recognise an Ig-like C2-type domain in the interval 27 to 110; that stretch reads PQAWGPPGVQ…SGGMVTLKLG (84 aa). 3 disulfides stabilise this stretch: C48-C94, C120-C130, and C170-C180. Fibronectin type-III domains follow at residues 112 to 219 and 220 to 317; these read PPAR…LRPD and PPQG…TPST. N127 carries N-linked (GlcNAc...) asparagine glycosylation. The segment at 151 to 170 is disordered; the sequence is KTLPGAESQRESPSTGPWPC. N-linked (GlcNAc...) asparagine glycosylation occurs at N194. The WSXWS motif motif lies at 304 to 308; it reads WSAWS. Disordered stretches follow at residues 309–332 and 342–361; these read PEAWGTPSTGPLQDEIPDWSQGHG and EDSPAPARPSLQPDPRPLDH. Residues 373-393 traverse the membrane as a helical segment; that stretch reads SLGIFSCLGLAVGALALGLWL. The Cytoplasmic segment spans residues 394–432; the sequence is RLRRSGKDGPQKPGLLAPMIPVEKLPGIPNLQRTPENFS.

The protein belongs to the type I cytokine receptor family. Type 3 subfamily. As to quaternary structure, on IL11 binding, forms a multimer complex with IL6ST/gp130. In terms of processing, a short soluble form is also released from the membrane by proteolysis. The sIL11RA is formed either by limited proteolysis of membrane-bound receptors, a process referred to as ectodomain shedding, or directly secreted from the cells after alternative mRNA splicing. mIL11RA is cleaved by the proteases ADAM10, ELANE and PRTN3. In terms of tissue distribution, widely expressed in all adult tissues and in embryos. Highest levels in kidney, skeletal muscle and embryo.

It is found in the membrane. Its subcellular location is the secreted. In terms of biological role, receptor for interleukin-11. The receptor systems for IL6, LIF, OSM, CNTF, IL11 and CT1 can utilize IL6ST for initiating signal transmission. The IL11/IL11RA/IL6ST complex may be involved in the control of proliferation and/or differentiation of skeletogenic progenitor or other mesenchymal cells. Essential for the normal development of craniofacial bones and teeth. Functionally, soluble form of IL11 receptor (sIL11RA) that acts as an agonist of IL11 activity. The IL11:sIL11RA complex binds to IL6ST/gp130 on cell surfaces and induces signaling also on cells that do not express membrane-bound IL11RA in a process called IL11 trans-signaling. This Mus musculus (Mouse) protein is Interleukin-11 receptor subunit alpha-1.